A 147-amino-acid chain; its full sequence is MGHFTEEDKATITSLWGKVNVEDVGGETLGRLLVVYPWTQRFFDSFGNLSSASAIMGNPKVKAHGKKVLTSLGGAIKNLDDLKGTFAQLSELHCDKLHVDPENFRLLGNVLVTVLAIHFGKEFTPEVQASWQKMVAGVASALSSRYH.

In terms of domain architecture, Globin spans 3-147 (HFTEEDKATI…VASALSSRYH (145 aa)). The residue at position 13 (threonine 13) is a Phosphothreonine. 3 positions are modified to phosphoserine: serine 45, serine 51, and serine 53. Lysine 60 is modified (N6-acetyllysine). Histidine 64 is a binding site for heme b. The residue at position 83 (lysine 83) is an N6-acetyllysine. Histidine 93 serves as a coordination point for heme b. Position 94 is an S-nitrosocysteine (cysteine 94). Phosphoserine is present on residues serine 140, serine 143, and serine 144.

This sequence belongs to the globin family. In terms of assembly, heterotetramer of two alpha chains and two gamma chains in fetal hemoglobin (Hb F). As to expression, red blood cells.

Functionally, gamma chains make up the fetal hemoglobin F, in combination with alpha chains. The sequence is that of Hemoglobin subunit gamma-2 (HBG2) from Hylobates lar (Lar gibbon).